A 183-amino-acid chain; its full sequence is Glutathione-regulated potassium-efflux system ancillary protein KefG (183 aa).

It belongs to the NAD(P)H dehydrogenase (quinone) family. KefG subfamily. In terms of assembly, interacts with KefB.

The protein resides in the cell inner membrane. It catalyses the reaction a quinone + NADH + H(+) = a quinol + NAD(+). The enzyme catalyses a quinone + NADPH + H(+) = a quinol + NADP(+). Functionally, regulatory subunit of a potassium efflux system that confers protection against electrophiles. Required for full activity of KefB. In Salmonella paratyphi B (strain ATCC BAA-1250 / SPB7), this protein is Glutathione-regulated potassium-efflux system ancillary protein KefG.